The following is a 333-amino-acid chain: MTILINDSTLRDGQHAVKHQLTAAQLRSYATAADKTGVAIVEVGHGNGLGASSYQVGRAALSDEEMLTTVRESLQNSKMGVFMLPGWGTIADLTKALAYGTDVVRIGTHCTEATLAERHLGWLREQGAEAHAVLMMSHMASPAELADQAELLVGYGAQAVGIMDSAGSLLPQDVTARITAMRMQVKVPLIFHAHNNLGMAVANSLAAVQAGAGIIDGCARGFGAGAGNTQLEVLIPVLERLGFNTGIDLYHFLDAADLAARELMVVPPMIDSLGIVSGLAGVFSGFKSPVLNHAGSAGVDARDVFFELGRRQIIAGQEDLIVEVVAELKRAAS.

The Pyruvate carboxyltransferase domain maps to 3-253 (ILINDSTLRD…NTGIDLYHFL (251 aa)). Residue 11 to 12 (RD) participates in substrate binding. Asp12 serves as a coordination point for Mn(2+). His15 (proton acceptor) is an active-site residue. Residues Ser165 and His192 each contribute to the substrate site. Residues His192 and His194 each contribute to the Mn(2+) site.

Belongs to the 4-hydroxy-2-oxovalerate aldolase family. Interacts with MhpF.

The catalysed reaction is (S)-4-hydroxy-2-oxopentanoate = acetaldehyde + pyruvate. It participates in aromatic compound metabolism; 3-phenylpropanoate degradation. Catalyzes the retro-aldol cleavage of 4-hydroxy-2-oxopentanoate to pyruvate and acetaldehyde. Is involved in the meta-cleavage pathway for the degradation of aromatic compounds. This Serratia proteamaculans (strain 568) protein is 4-hydroxy-2-oxovalerate aldolase.